The following is a 1488-amino-acid chain: Chromosome partition protein MukB (1488 aa).

ATP is bound at residue 34–41 (GGNGAGKS). 3 coiled-coil regions span residues 326–418 (LEAD…QYNQ), 444–472 (LDTFQAKEQEATEKLLSLEQKMSVAQTAH), and 509–602 (RHLA…QRAP). The segment at 666–783 (PGGAEDQRLN…SLPIFGRAAR (118 aa)) is flexible hinge. 3 coiled-coil regions span residues 835 to 923 (EAEI…AKLE), 977 to 1116 (EMLS…AKAG), and 1209 to 1265 (VEAI…LQSV). The segment at 1049 to 1074 (ADSGAEERARQRRDELHAQLSNNRSR) is disordered. Residues 1051 to 1065 (SGAEERARQRRDELH) show a composition bias toward basic and acidic residues.

Belongs to the SMC family. MukB subfamily. As to quaternary structure, homodimerization via its hinge domain. Binds to DNA via its C-terminal region. Interacts, and probably forms a ternary complex, with MukE and MukF via its C-terminal region. The complex formation is stimulated by calcium or magnesium. Interacts with tubulin-related protein FtsZ.

The protein localises to the cytoplasm. It localises to the nucleoid. Functionally, plays a central role in chromosome condensation, segregation and cell cycle progression. Functions as a homodimer, which is essential for chromosome partition. Involved in negative DNA supercoiling in vivo, and by this means organize and compact chromosomes. May achieve or facilitate chromosome segregation by condensation DNA from both sides of a centrally located replisome during cell division. The polypeptide is Chromosome partition protein MukB (Salmonella schwarzengrund (strain CVM19633)).